Reading from the N-terminus, the 425-residue chain is 2-oxoglutarate and iron-dependent oxygenase JMJD4 homolog (425 aa).

A JmjC domain is found at 165-316; that stretch reads AAQMPGYNFY…MVWQNLKNNL (152 aa). Fe cation contacts are provided by His212, Asp214, and His284.

This sequence belongs to the JMJD6 family. Fe(2+) serves as cofactor.

It is found in the nucleus. It localises to the cytoplasm. It catalyses the reaction L-lysyl-[protein] + 2-oxoglutarate + O2 = 4-hydroxy-L-lysyl-[protein] + succinate + CO2. Functionally, catalyzes the 2-oxoglutarate and iron-dependent C4-lysyl hydroxylation of eRF1 thereby promoting the translational termination efficiency of eRF1. May be involved in regulation of chromatin structure, promoting expansion of heterochromatin. In Drosophila melanogaster (Fruit fly), this protein is 2-oxoglutarate and iron-dependent oxygenase JMJD4 homolog.